We begin with the raw amino-acid sequence, 630 residues long: Transposase B from transposon PsiTn554 (630 aa).

The Core-binding (CB) domain maps to 216-302; the sequence is TYFKQLVKRY…ILEGLFSTLH (87 aa). Residues 326–513 enclose the Tyr recombinase domain; the sequence is AKPRFIDEFV…FDETLKNEFT (188 aa). Active-site residues include Arg363, Lys391, His465, Arg468, and His491. Residue Tyr500 is the O-(3'-phospho-DNA)-tyrosine intermediate of the active site.

This sequence belongs to the 'phage' integrase family.

The sequence is that of Transposase B from transposon PsiTn554 (tnpB) from Staphylococcus aureus.